A 159-amino-acid polypeptide reads, in one-letter code: MNITIIAVGKLKEKYLKAAVEEYSKRLSRYCRLNIIEVQDEKTPDNASSSEQDIIKEKEGRRILKYINDNMYVVALDLKGSMMGSEEFSKFVGNLGLSGKSNIAFIIGGSLGISSEILKRADYKLCFSKMTFPHQLFRIMLLEQIYRGFRIMKGEPYHK.

S-adenosyl-L-methionine contacts are provided by residues leucine 76, glycine 108, and 127 to 132; that span reads FSKMTF.

Belongs to the RNA methyltransferase RlmH family. In terms of assembly, homodimer.

Its subcellular location is the cytoplasm. The enzyme catalyses pseudouridine(1915) in 23S rRNA + S-adenosyl-L-methionine = N(3)-methylpseudouridine(1915) in 23S rRNA + S-adenosyl-L-homocysteine + H(+). In terms of biological role, specifically methylates the pseudouridine at position 1915 (m3Psi1915) in 23S rRNA. This is Ribosomal RNA large subunit methyltransferase H from Clostridium kluyveri (strain NBRC 12016).